The sequence spans 448 residues: tRNA modification GTPase MnmE (448 aa).

(6S)-5-formyl-5,6,7,8-tetrahydrofolate contacts are provided by Arg24, Glu81, and Lys120. The region spanning 216-373 (GLNVVLVGAP…LKRTLLCEAG (158 aa)) is the TrmE-type G domain. Asn226 contacts K(+). Residues 226–231 (NVGKSS), 245–251 (TDIAGTT), and 270–273 (DTAG) each bind GTP. Ser230 contributes to the Mg(2+) binding site. Thr245, Ile247, and Thr250 together coordinate K(+). Thr251 is a Mg(2+) binding site. Position 448 (Lys448) interacts with (6S)-5-formyl-5,6,7,8-tetrahydrofolate.

The protein belongs to the TRAFAC class TrmE-Era-EngA-EngB-Septin-like GTPase superfamily. TrmE GTPase family. In terms of assembly, homodimer. Heterotetramer of two MnmE and two MnmG subunits. K(+) is required as a cofactor.

It is found in the cytoplasm. In terms of biological role, exhibits a very high intrinsic GTPase hydrolysis rate. Involved in the addition of a carboxymethylaminomethyl (cmnm) group at the wobble position (U34) of certain tRNAs, forming tRNA-cmnm(5)s(2)U34. In Neisseria gonorrhoeae (strain ATCC 700825 / FA 1090), this protein is tRNA modification GTPase MnmE.